A 137-amino-acid polypeptide reads, in one-letter code: NADPH-dependent 7-cyano-7-deazaguanine reductase (137 aa).

The Thioimide intermediate role is filled by cysteine 45. Residue aspartate 52 is the Proton donor of the active site. Substrate-binding positions include 68-70 and 87-88; these read VEL and QE.

Belongs to the GTP cyclohydrolase I family. QueF type 1 subfamily.

The protein localises to the cytoplasm. It carries out the reaction 7-aminomethyl-7-carbaguanine + 2 NADP(+) = 7-cyano-7-deazaguanine + 2 NADPH + 3 H(+). It functions in the pathway tRNA modification; tRNA-queuosine biosynthesis. Its function is as follows. Catalyzes the NADPH-dependent reduction of 7-cyano-7-deazaguanine (preQ0) to 7-aminomethyl-7-deazaguanine (preQ1). The polypeptide is NADPH-dependent 7-cyano-7-deazaguanine reductase (Thermotoga petrophila (strain ATCC BAA-488 / DSM 13995 / JCM 10881 / RKU-1)).